Consider the following 220-residue polypeptide: Avenin-3 (220 aa).

A signal peptide spans 1-19 (MKTFLIFALLAMAATMATA). At Gln-20 the chain carries Pyrrolidone carboxylic acid. Tandem repeats lie at residues 41 to 48 (QQMLLQQQ) and 49 to 56 (QQMLLQQQ). The interval 41–56 (QQMLLQQQQQMLLQQQ) is 2 X 8 AA tandem repeats of Q-Q-M-L-L-Q-Q-Q. 4 cysteine pairs are disulfide-bonded: Cys-69–Cys-202, Cys-77–Cys-96, Cys-103–Cys-104, and Cys-116–Cys-210. A 2-1 repeat occupies 128-137 (MQQQQFFQPQ). Residues 128 to 146 (MQQQQFFQPQMQQQFFQPQ) form a 2 X 10 AA tandem repeats of M-Q-Q-Q-Q-F-F-Q-P-Q region. The 2-2; approximate repeat unit spans residues 138–146 (MQQQFFQPQ).

This sequence belongs to the gliadin/glutenin family. Monomer.

It is found in the vacuole. In terms of biological role, seed storage protein. Serves as a source of nitrogen, carbon, and sulfur for the young developing seedling. The polypeptide is Avenin-3 (Avena sativa (Oat)).